Consider the following 502-residue polypeptide: N-sulphoglucosamine sulphohydrolase (502 aa).

The N-terminal stretch at 1-20 (MSCPVPACCALLLVLGLCRA) is a signal peptide. D31 and D32 together coordinate Ca(2+). N-linked (GlcNAc...) asparagine glycosylation occurs at N41. C70 is a Ca(2+) binding site. C70 (nucleophile) is an active-site residue. Residue C70 is modified to 3-oxoalanine (Cys). N142 and N151 each carry an N-linked (GlcNAc...) asparagine glycan. Cysteines 183 and 194 form a disulfide. The N-linked (GlcNAc...) asparagine glycan is linked to N264. 2 residues coordinate Ca(2+): D273 and N274. N-linked (GlcNAc...) asparagine glycosylation occurs at N413. C481 and C495 form a disulfide bridge.

It belongs to the sulfatase family. The cofactor is Ca(2+). The conversion to 3-oxoalanine (also known as C-formylglycine, FGly), of a serine or cysteine residue in prokaryotes and of a cysteine residue in eukaryotes, is critical for catalytic activity.

The protein resides in the lysosome. The catalysed reaction is N-sulfo-D-glucosamine + H2O = D-glucosamine + sulfate. Functionally, catalyzes a step in lysosomal heparan sulfate degradation. The sequence is that of N-sulphoglucosamine sulphohydrolase (SGSH) from Homo sapiens (Human).